The sequence spans 306 residues: Agmatinase (306 aa).

Mn(2+) is bound by residues His-126, Asp-149, His-151, Asp-153, Asp-230, and Asp-232.

Belongs to the arginase family. Agmatinase subfamily. Mn(2+) serves as cofactor.

It carries out the reaction agmatine + H2O = urea + putrescine. It participates in amine and polyamine biosynthesis; putrescine biosynthesis via agmatine pathway; putrescine from agmatine: step 1/1. In terms of biological role, catalyzes the formation of putrescine from agmatine. The protein is Agmatinase of Escherichia coli O7:K1 (strain IAI39 / ExPEC).